The following is a 537-amino-acid chain: Endoprotease aex-5 (537 aa).

A signal peptide spans 1 to 17 (MKLIFLLLLFGVSPIVC). A propeptide spanning residues 18–99 (QDFEDGVFLA…KLQGFRRYKR (82 aa)) is cleaved from the precursor. Residues 111 to 413 (VWNLTPSLYI…FGLLNAQKLV (303 aa)) form the Peptidase S8 domain. Asn-129 carries N-linked (GlcNAc...) asparagine glycosylation. Residues Asp-139 and His-178 each act as charge relay system in the active site. The cysteines at positions 286 and 316 are disulfide-linked. The active-site Charge relay system is Ser-346. Asn-380 is a glycosylation site (N-linked (GlcNAc...) asparagine). Positions 407–537 (LNAQKLVVMA…KMFKVVGTMS (131 aa)) constitute a P/Homo B domain.

The protein belongs to the peptidase S8 family. Furin subfamily.

The protein localises to the secreted. Functionally, probable serine endoprotease which cleaves preproteins at paired basic amino acids. May process FMRFamide-like (flp) and neuropeptide-like protein (nlp) neuropeptides. In muscles, involved in neuronal retrograde signaling by regulating presynaptic activity and localization of synaptic vesicle fusion protein unc-13 at the neuromuscular junction (NMJ). Acts in the intestine to regulate anterior body muscle contractions (aBOC) and the expulsion steps during the defecation motor program (DMP). Probably by regulating DMP, required for fatty acid uptake by intestinal cells and therefore regulates the levels of triglycerides in the intestine. Plays a role in locomotion. The protein is Endoprotease aex-5 of Caenorhabditis elegans.